Consider the following 287-residue polypeptide: Nuclease S1 (287 aa).

The N-terminal stretch at 1-20 is a signal peptide; the sequence is MPRLLPISAATLALAQLTYG. Residues Trp21, His26, Asp65, and His80 each contribute to the a divalent metal cation site. Substrate is bound by residues 21–26, 65–71, 80–83, and 93–98; these read WGNLGH, DTYKYTD, HFID, and GVDYDR. Cystine bridges form between Cys92-Cys236 and Cys100-Cys105. N-linked (GlcNAc...) asparagine glycans are attached at residues Asn112 and Asn122. His135, Asp139, His145, His168, and Asp172 together coordinate a divalent metal cation. The tract at residues 135–183 is substrate binding; the sequence is HIIGDIHQPLHDENLEAGGNGIDVTYDGETTNLHHIWDTNMPEEAAGGY. N-linked (GlcNAc...) asparagine glycosylation occurs at Asn248.

Belongs to the nuclease type I family. In terms of assembly, monomer. Requires Zn(2+) as cofactor.

It catalyses the reaction Endonucleolytic cleavage to 5'-phosphomononucleotide and 5'-phosphooligonucleotide end-products.. Inhibited by inorganic phosphate (Pi). In terms of biological role, hydrolyzes only single-stranded DNA and RNA without apparent specificity for bases. This chain is Nuclease S1, found in Aspergillus oryzae (strain ATCC 42149 / RIB 40) (Yellow koji mold).